Reading from the N-terminus, the 298-residue chain is Tyrosine recombinase XerD (298 aa).

The Core-binding (CB) domain maps to 2–87 (KQELARIEQF…AVRRLFQYLY (86 aa)). Positions 108–292 (RLPKDLSEAQ…ATERLRQLHQ (185 aa)) constitute a Tyr recombinase domain. Catalysis depends on residues Arg148, Lys172, His244, Arg247, and His270. Catalysis depends on Tyr279, which acts as the O-(3'-phospho-DNA)-tyrosine intermediate.

It belongs to the 'phage' integrase family. XerD subfamily. In terms of assembly, forms a cyclic heterotetrameric complex composed of two molecules of XerC and two molecules of XerD, in which XerC interacts with XerD via its C-terminal region, XerD interacts with XerC via its C-terminal region and so on.

Its subcellular location is the cytoplasm. Its activity is regulated as follows. FtsK may regulate the catalytic switch between XerC and XerD in the heterotetrameric complex during the two steps of the recombination process. Site-specific tyrosine recombinase, which acts by catalyzing the cutting and rejoining of the recombining DNA molecules. Binds cooperatively to specific DNA consensus sequences that are separated from XerC binding sites by a short central region, forming the heterotetrameric XerC-XerD complex that recombines DNA substrates. The complex is essential to convert dimers of the bacterial chromosome into monomers to permit their segregation at cell division. It also contributes to the segregational stability of plasmids. In the complex XerD specifically exchanges the bottom DNA strands. This Shigella flexneri protein is Tyrosine recombinase XerD.